Consider the following 224-residue polypeptide: uncharacterized protein (224 aa).

The next 6 helical transmembrane spans lie at Met25 to Phe45, Ile54 to Ile74, Ile91 to Phe111, Phe119 to Leu139, Ile142 to Ile162, and His174 to Phe194.

It localises to the cell membrane. This is an uncharacterized protein from Mycoplasma genitalium (strain ATCC 33530 / DSM 19775 / NCTC 10195 / G37) (Mycoplasmoides genitalium).